The primary structure comprises 430 residues: Asparagine--tRNA ligase (430 aa).

Belongs to the class-II aminoacyl-tRNA synthetase family. In terms of assembly, homodimer.

Its subcellular location is the cytoplasm. The enzyme catalyses tRNA(Asn) + L-asparagine + ATP = L-asparaginyl-tRNA(Asn) + AMP + diphosphate + H(+). The sequence is that of Asparagine--tRNA ligase from Staphylococcus aureus (strain MW2).